Here is a 289-residue protein sequence, read N- to C-terminus: tRNA pseudouridine synthase B (289 aa).

Aspartate 38 serves as the catalytic Nucleophile.

The protein belongs to the pseudouridine synthase TruB family. Type 1 subfamily.

The catalysed reaction is uridine(55) in tRNA = pseudouridine(55) in tRNA. Its function is as follows. Responsible for synthesis of pseudouridine from uracil-55 in the psi GC loop of transfer RNAs. In Acaryochloris marina (strain MBIC 11017), this protein is tRNA pseudouridine synthase B.